Consider the following 273-residue polypeptide: Undecaprenyl-diphosphatase (273 aa).

A run of 7 helical transmembrane segments spans residues 6–26, 45–65, 90–110, 116–136, 190–210, 222–242, and 252–272; these read SLLI…LPVS, AKTF…VMFW, LTLI…LLFH, LFNP…LIAA, YAAS…ATAL, GDIP…LIAI, and ISFI…YVVF.

It belongs to the UppP family.

It localises to the cell inner membrane. The catalysed reaction is di-trans,octa-cis-undecaprenyl diphosphate + H2O = di-trans,octa-cis-undecaprenyl phosphate + phosphate + H(+). Functionally, catalyzes the dephosphorylation of undecaprenyl diphosphate (UPP). Confers resistance to bacitracin. This chain is Undecaprenyl-diphosphatase, found in Escherichia coli O127:H6 (strain E2348/69 / EPEC).